A 99-amino-acid chain; its full sequence is Protein IDA-LIKE 3 (99 aa).

The first 32 residues, 1-32, serve as a signal peptide directing secretion; sequence MSSRSHRSRKYQLTRTIPILVLLLVLLSCCNG. Residues 36–45 are compositionally biased toward polar residues; it reads TNVFNTSSPP. Disordered stretches follow at residues 36 to 58 and 73 to 99; these read TNVFNTSSPPKQKDVVSPPHDHV and SLPRQFPVPTSGPSRKHNEIGLSSTKT. The segment covering 46-58 has biased composition (basic and acidic residues); that stretch reads KQKDVVSPPHDHV.

In terms of tissue distribution, expressed in flowers and seedlings. Detected at the base of pedicel, in the floral abscission zone and in vascular tissues.

It is found in the secreted. The protein resides in the extracellular space. Its function is as follows. May be involved in floral abscission. This is Protein IDA-LIKE 3 (IDL3) from Arabidopsis thaliana (Mouse-ear cress).